Reading from the N-terminus, the 269-residue chain is Histone doublet H2B-H2A (269 aa).

A histone fold region spans residues 1–168 (MATQKETTRK…LAGNAARDSK (168 aa)). The interval 210 to 249 (RKKARKTTEKEASSPKKKAAPKKKKAASKQKKSLSDKELA) is disordered. Residues 224 to 241 (PKKKAAPKKKKAASKQKK) show a composition bias toward basic residues.

Its subcellular location is the host nucleus. It localises to the host cytoplasm. It is found in the virion. Histone-like protein that is recruited to viral factories during viral replication and participates in viral DNA packaging and virion production probably by forming unstable nucleosome-like particles. May compact the viral DNA. The chain is Histone doublet H2B-H2A from Melbournevirus (MelV).